The primary structure comprises 330 residues: ADP-L-glycero-D-manno-heptose-6-epimerase (330 aa).

NADP(+) is bound by residues 11 to 12 (FI), 32 to 33 (DN), K39, K54, 75 to 79 (EGACS), and N92. Y139 (proton acceptor) is an active-site residue. NADP(+) is bound at residue K143. Residue N168 participates in substrate binding. 2 residues coordinate NADP(+): V169 and K177. Catalysis depends on K177, which acts as the Proton acceptor. Substrate-binding positions include R179, H186, 200-203 (FGEY), R213, and Y292.

This sequence belongs to the NAD(P)-dependent epimerase/dehydratase family. HldD subfamily. In terms of assembly, homopentamer. Requires NADP(+) as cofactor.

It catalyses the reaction ADP-D-glycero-beta-D-manno-heptose = ADP-L-glycero-beta-D-manno-heptose. It functions in the pathway nucleotide-sugar biosynthesis; ADP-L-glycero-beta-D-manno-heptose biosynthesis; ADP-L-glycero-beta-D-manno-heptose from D-glycero-beta-D-manno-heptose 7-phosphate: step 4/4. Functionally, catalyzes the interconversion between ADP-D-glycero-beta-D-manno-heptose and ADP-L-glycero-beta-D-manno-heptose via an epimerization at carbon 6 of the heptose. The chain is ADP-L-glycero-D-manno-heptose-6-epimerase from Burkholderia pseudomallei (strain K96243).